A 326-amino-acid polypeptide reads, in one-letter code: MSHAPGEGRPVSSLFPARCNEEVASQNATTMATLNEIELSEIEELSLNFKETPRQDHSMTPVELCYFDDFATTLVVDAVLNFSTHKMCKKRRYLYGDEQRVARELMERFRKDQDWTPAIYGFLNMRSVRSFIEKLAFNKQLEFRDHIIRFLNVFHHDSGYTIQECTRYSLEGNQGAKLVATRAWYRGDKIQRLSGVVCLLSTQDEDTILQPEGSDFSVMYSNRKRCSTLWLGPGAYINHDCRPTCEFVSHGSTAHIRVLRDMVAGDEITCFYGSEFFGPKNMDCECLTCEKTKRGKFSTSDEEENDEPSALSEKRIKYGLRSRSRV.

One can recognise an SET domain in the interval 163–273 (QECTRYSLEG…AGDEITCFYG (111 aa)). The disordered stretch occupies residues 294 to 313 (RGKFSTSDEEENDEPSALSE).

This sequence belongs to the class V-like SAM-binding methyltransferase superfamily. Histone-lysine methyltransferase family. Suvar4-20 subfamily.

The protein resides in the nucleus. The protein localises to the chromosome. The catalysed reaction is N(6)-methyl-L-lysyl(20)-[histone H4] + S-adenosyl-L-methionine = N(6),N(6)-dimethyl-L-lysyl(20)-[histone H4] + S-adenosyl-L-homocysteine + H(+). It catalyses the reaction N(6),N(6)-dimethyl-L-lysyl(20)-[histone H4] + S-adenosyl-L-methionine = N(6),N(6),N(6)-trimethyl-L-lysyl(20)-[histone H4] + S-adenosyl-L-homocysteine + H(+). Its function is as follows. Histone methyltransferase that specifically di- and trimethylates 'Lys-20' of histone H4 (H4K20me2/me3). H4 'Lys-20' trimethylation represents a specific tag for epigenetic transcriptional repression. Contributes to dosage compensation of X chromosome-relative to autosome-linked gene expression, possibly by converting H4K20me1 to H4K20m2/me3 on autosomes. Involved in the regulation of growth and body fat metabolism downstream of the TOR complex 2 pathway. The polypeptide is Histone-lysine N-methyltransferase Suv4-20 (Caenorhabditis briggsae).